Reading from the N-terminus, the 405-residue chain is Probable tRNA sulfurtransferase (405 aa).

Residues 60–165 enclose the THUMP domain; sequence DQVMARLSQV…REAIYLSTKT (106 aa). ATP-binding positions include 183–184, 208–209, R265, G287, and Q296; these read ML and HF.

It belongs to the ThiI family.

Its subcellular location is the cytoplasm. The enzyme catalyses [ThiI sulfur-carrier protein]-S-sulfanyl-L-cysteine + a uridine in tRNA + 2 reduced [2Fe-2S]-[ferredoxin] + ATP + H(+) = [ThiI sulfur-carrier protein]-L-cysteine + a 4-thiouridine in tRNA + 2 oxidized [2Fe-2S]-[ferredoxin] + AMP + diphosphate. It carries out the reaction [ThiS sulfur-carrier protein]-C-terminal Gly-Gly-AMP + S-sulfanyl-L-cysteinyl-[cysteine desulfurase] + AH2 = [ThiS sulfur-carrier protein]-C-terminal-Gly-aminoethanethioate + L-cysteinyl-[cysteine desulfurase] + A + AMP + 2 H(+). Its pathway is cofactor biosynthesis; thiamine diphosphate biosynthesis. Its function is as follows. Catalyzes the ATP-dependent transfer of a sulfur to tRNA to produce 4-thiouridine in position 8 of tRNAs, which functions as a near-UV photosensor. Also catalyzes the transfer of sulfur to the sulfur carrier protein ThiS, forming ThiS-thiocarboxylate. This is a step in the synthesis of thiazole, in the thiamine biosynthesis pathway. The sulfur is donated as persulfide by IscS. In Lacticaseibacillus paracasei (strain ATCC 334 / BCRC 17002 / CCUG 31169 / CIP 107868 / KCTC 3260 / NRRL B-441) (Lactobacillus paracasei), this protein is Probable tRNA sulfurtransferase.